Reading from the N-terminus, the 101-residue chain is Protein RnfH (101 aa).

It belongs to the UPF0125 (RnfH) family.

In Coxiella burnetii (strain RSA 331 / Henzerling II), this protein is Protein RnfH.